A 362-amino-acid chain; its full sequence is Peptide chain release factor 1 (362 aa).

Gln240 is modified (N5-methylglutamine).

This sequence belongs to the prokaryotic/mitochondrial release factor family. In terms of processing, methylated by PrmC. Methylation increases the termination efficiency of RF1.

Its subcellular location is the cytoplasm. Peptide chain release factor 1 directs the termination of translation in response to the peptide chain termination codons UAG and UAA. The polypeptide is Peptide chain release factor 1 (Bifidobacterium longum (strain NCC 2705)).